We begin with the raw amino-acid sequence, 163 residues long: Phosphopantetheine adenylyltransferase (163 aa).

Residue Ser9 coordinates substrate. ATP is bound by residues 9 to 10 (SF) and His17. Residues Lys41, Ile75, and Arg89 each contribute to the substrate site. ATP contacts are provided by residues 90-92 (GIR), Glu100, and 125-131 (HLYVRSD).

The protein belongs to the bacterial CoaD family. Homohexamer. It depends on Mg(2+) as a cofactor.

The protein localises to the cytoplasm. It carries out the reaction (R)-4'-phosphopantetheine + ATP + H(+) = 3'-dephospho-CoA + diphosphate. Its pathway is cofactor biosynthesis; coenzyme A biosynthesis; CoA from (R)-pantothenate: step 4/5. Reversibly transfers an adenylyl group from ATP to 4'-phosphopantetheine, yielding dephospho-CoA (dPCoA) and pyrophosphate. The sequence is that of Phosphopantetheine adenylyltransferase from Borrelia garinii subsp. bavariensis (strain ATCC BAA-2496 / DSM 23469 / PBi) (Borreliella bavariensis).